A 325-amino-acid polypeptide reads, in one-letter code: MRVENNNVSGQNLDPEQIDLIDLLVQLWRGKMTIIISVIVAIVLAIGYLVVAKEKWTSTAIVTQPDVGQIAGYNNAINVIYGSAAPKVSEIQSILIGRFSTTFSALAETLDNQEEPEKLTIEPTVKNQSLPLAVSYVGQSPEAAQKQLAQYIQQVDDQVNDELEKDLKDNIALRMKNLQDSLKTQEVVAQEQKELRIRQIQEALQYANQAQVTKPQIQQTQDVTQDTMFLLGSDALESMVKHEASRPLVFSSTYYQTRQNLLDIESLKVDDLDIHAYRYVMKPTLPIRRDSPKKAITLILAVLLGGMVGAGIVLGRNALRNYNAK.

The Cytoplasmic segment spans residues 1 to 31 (MRVENNNVSGQNLDPEQIDLIDLLVQLWRGK). The helical transmembrane segment at 32 to 52 (MTIIISVIVAIVLAIGYLVVA) threads the bilayer. Over 53–294 (KEKWTSTAIV…LPIRRDSPKK (242 aa)) the chain is Periplasmic. Residues 295 to 315 (AITLILAVLLGGMVGAGIVLG) traverse the membrane as a helical segment. The Cytoplasmic portion of the chain corresponds to 316–325 (RNALRNYNAK).

It belongs to the WzzB/Cld/Rol family.

It localises to the cell inner membrane. Its pathway is bacterial outer membrane biogenesis; lipopolysaccharide biosynthesis. Its function is as follows. Confers a modal distribution of chain length on the O-antigen component of lipopolysaccharide (LPS). Gives rise to a reduced number of short chain molecules and increases in numbers of longer molecules, with a modal value of 13 (in strain O111/M92) and of 17 (in strain K12). The sequence is that of Chain length determinant protein (wzzB) from Escherichia coli.